The primary structure comprises 204 residues: Leucyl/phenylalanyl-tRNA--protein transferase (204 aa).

It belongs to the L/F-transferase family.

It is found in the cytoplasm. The enzyme catalyses N-terminal L-lysyl-[protein] + L-leucyl-tRNA(Leu) = N-terminal L-leucyl-L-lysyl-[protein] + tRNA(Leu) + H(+). The catalysed reaction is N-terminal L-arginyl-[protein] + L-leucyl-tRNA(Leu) = N-terminal L-leucyl-L-arginyl-[protein] + tRNA(Leu) + H(+). It catalyses the reaction L-phenylalanyl-tRNA(Phe) + an N-terminal L-alpha-aminoacyl-[protein] = an N-terminal L-phenylalanyl-L-alpha-aminoacyl-[protein] + tRNA(Phe). Its function is as follows. Functions in the N-end rule pathway of protein degradation where it conjugates Leu, Phe and, less efficiently, Met from aminoacyl-tRNAs to the N-termini of proteins containing an N-terminal arginine or lysine. The chain is Leucyl/phenylalanyl-tRNA--protein transferase from Brucella anthropi (strain ATCC 49188 / DSM 6882 / CCUG 24695 / JCM 21032 / LMG 3331 / NBRC 15819 / NCTC 12168 / Alc 37) (Ochrobactrum anthropi).